The following is a 1386-amino-acid chain: Lysophospholipase NTE1 (1386 aa).

At 1 to 19 (MGPEFEDSIPLVHSDNRTT) the chain is on the cytoplasmic side. The chain crosses the membrane as a helical span at residues 20–40 (TIYSVYIIISDIFSFVQWLLF). The Lumenal segment spans residues 41–65 (KVLNLIIIDSPAFVLRLLSKNFEIN). A helical transmembrane segment spans residues 66–86 (LHLSSILATLIGVSVVTYLVI). The Cytoplasmic portion of the chain corresponds to 87–1386 (RYKFLTGYSH…KKILYRRNSI (1300 aa)). The segment at 394–416 (EAEAENLPKKLKHHHRNQLQRTT) is disordered. Basic residues predominate over residues 402 to 411 (KKLKHHHRNQ). A nucleoside 3',5'-cyclic phosphate contacts are provided by residues 577 to 701 (KRLL…LKNL) and 697 to 821 (KLKN…VASK). The 165-residue stretch at 1081–1245 (LVLGGGGSRG…LDNLPVNEMK (165 aa)) folds into the PNPLA domain. Residues 1085–1090 (GGGSRG) carry the GXGXXG motif. The short motif at 1112–1116 (GTSIG) is the GXSXG element. Ser1114 functions as the Nucleophile in the catalytic mechanism. The Proton acceptor role is filled by Asp1232. The DGA/G signature appears at 1232 to 1234 (DGG).

The protein belongs to the NTE family.

The protein localises to the endoplasmic reticulum membrane. The catalysed reaction is a 1-acyl-sn-glycero-3-phosphocholine + H2O = sn-glycerol 3-phosphocholine + a fatty acid + H(+). Its activity is regulated as follows. Inhibited by organophosphorus esters. In terms of biological role, intracellular phospholipase B that catalyzes the double deacylation of phosphatidylcholine (PC) to glycerophosphocholine (GroPCho). Plays an important role in membrane lipid homeostasis. Responsible for the rapid PC turnover in response to inositol, elevated temperatures, or when choline is present in the growth medium. The polypeptide is Lysophospholipase NTE1 (NTE1) (Candida albicans (strain SC5314 / ATCC MYA-2876) (Yeast)).